The following is a 155-amino-acid chain: Protein archease-like (155 aa).

3 residues coordinate Ca(2+): D26, D154, and I155.

Belongs to the archease family.

Functionally, component of the tRNA-splicing ligase complex required to facilitate the enzymatic turnover of catalytic subunit RtcB. The protein is Protein archease-like of Caenorhabditis briggsae.